Consider the following 72-residue polypeptide: Translation initiation factor IF-1 (72 aa).

The S1-like domain occupies 1–72 (MAKDDVIEVE…TRGRITYRYK (72 aa)). Tyr60 bears the Phosphotyrosine mark.

Belongs to the IF-1 family. Component of the 30S ribosomal translation pre-initiation complex which assembles on the 30S ribosome in the order IF-2 and IF-3, IF-1 and N-formylmethionyl-tRNA(fMet); mRNA recruitment can occur at any time during PIC assembly.

It localises to the cytoplasm. Functionally, one of the essential components for the initiation of protein synthesis. Stabilizes the binding of IF-2 and IF-3 on the 30S subunit to which N-formylmethionyl-tRNA(fMet) subsequently binds. Helps modulate mRNA selection, yielding the 30S pre-initiation complex (PIC). Upon addition of the 50S ribosomal subunit IF-1, IF-2 and IF-3 are released leaving the mature 70S translation initiation complex. In Oceanobacillus iheyensis (strain DSM 14371 / CIP 107618 / JCM 11309 / KCTC 3954 / HTE831), this protein is Translation initiation factor IF-1.